We begin with the raw amino-acid sequence, 210 residues long: Dof zinc finger protein DOF4.4 (210 aa).

Residues 24 to 78 (RVCPRCDSDNTKFCFYNNYSESQPRYFCKNCRRYWTHGGALRNIPVGGSCRKPKR) form a Dof-type zinc finger. Zn(2+)-binding residues include C26, C29, C51, and C54.

Its subcellular location is the nucleus. Functionally, transcription factor that binds specifically to a 5'-AA[AG]G-3' consensus core sequence. This chain is Dof zinc finger protein DOF4.4 (DOF4.4), found in Arabidopsis thaliana (Mouse-ear cress).